A 542-amino-acid chain; its full sequence is CTP synthase (542 aa).

An amidoligase domain region spans residues 1–266; the sequence is MATNYIFVTG…DDFICQRFHL (266 aa). Serine 14 serves as a coordination point for CTP. Residue serine 14 coordinates UTP. Residues 15-20 and aspartate 72 contribute to the ATP site; that span reads SLGKGI. Mg(2+) is bound by residues aspartate 72 and glutamate 140. CTP-binding positions include 147–149, 187–192, and lysine 223; these read DIE and KTKPTQ. UTP is bound by residues 187–192 and lysine 223; that span reads KTKPTQ. 239–241 is an ATP binding site; it reads KDV. One can recognise a Glutamine amidotransferase type-1 domain in the interval 291 to 542; the sequence is VIGMVGKYTE…VKAAKDNQKK (252 aa). Residue glycine 352 coordinates L-glutamine. The active-site Nucleophile; for glutamine hydrolysis is cysteine 379. L-glutamine contacts are provided by residues 380–383, glutamate 403, and arginine 470; that span reads LGMQ. Catalysis depends on residues histidine 515 and glutamate 517.

This sequence belongs to the CTP synthase family. As to quaternary structure, homotetramer.

It carries out the reaction UTP + L-glutamine + ATP + H2O = CTP + L-glutamate + ADP + phosphate + 2 H(+). The enzyme catalyses L-glutamine + H2O = L-glutamate + NH4(+). The catalysed reaction is UTP + NH4(+) + ATP = CTP + ADP + phosphate + 2 H(+). The protein operates within pyrimidine metabolism; CTP biosynthesis via de novo pathway; CTP from UDP: step 2/2. Allosterically activated by GTP, when glutamine is the substrate; GTP has no effect on the reaction when ammonia is the substrate. The allosteric effector GTP functions by stabilizing the protein conformation that binds the tetrahedral intermediate(s) formed during glutamine hydrolysis. Inhibited by the product CTP, via allosteric rather than competitive inhibition. In terms of biological role, catalyzes the ATP-dependent amination of UTP to CTP with either L-glutamine or ammonia as the source of nitrogen. Regulates intracellular CTP levels through interactions with the four ribonucleotide triphosphates. The sequence is that of CTP synthase from Pasteurella multocida (strain Pm70).